The sequence spans 249 residues: 2,3-bisphosphoglycerate-dependent phosphoglycerate mutase (249 aa).

Substrate is bound by residues 9–16 (RHGQSQWN), 22–23 (TG), Arg-61, 88–91 (ERHY), Lys-99, 115–116 (RR), and 184–185 (GN). The active-site Tele-phosphohistidine intermediate is His-10. The Proton donor/acceptor role is filled by Glu-88.

The protein belongs to the phosphoglycerate mutase family. BPG-dependent PGAM subfamily. As to quaternary structure, homodimer.

It carries out the reaction (2R)-2-phosphoglycerate = (2R)-3-phosphoglycerate. It functions in the pathway carbohydrate degradation; glycolysis; pyruvate from D-glyceraldehyde 3-phosphate: step 3/5. Its function is as follows. Catalyzes the interconversion of 2-phosphoglycerate and 3-phosphoglycerate. The chain is 2,3-bisphosphoglycerate-dependent phosphoglycerate mutase from Xanthomonas campestris pv. campestris (strain B100).